A 223-amino-acid polypeptide reads, in one-letter code: Pyridoxine/pyridoxamine 5'-phosphate oxidase (223 aa).

Residues R9 to Y12 and K76 each bind substrate. FMN is bound by residues R71 to K76, F86 to T87, K93, and Q115. Y133, R137, and S141 together coordinate substrate. FMN-binding positions include Q150–S151 and W196. A substrate-binding site is contributed by R202 to H204. An FMN-binding site is contributed by R206.

It belongs to the pyridoxamine 5'-phosphate oxidase family. In terms of assembly, homodimer. FMN is required as a cofactor.

It carries out the reaction pyridoxamine 5'-phosphate + O2 + H2O = pyridoxal 5'-phosphate + H2O2 + NH4(+). The enzyme catalyses pyridoxine 5'-phosphate + O2 = pyridoxal 5'-phosphate + H2O2. Its pathway is cofactor metabolism; pyridoxal 5'-phosphate salvage; pyridoxal 5'-phosphate from pyridoxamine 5'-phosphate: step 1/1. It participates in cofactor metabolism; pyridoxal 5'-phosphate salvage; pyridoxal 5'-phosphate from pyridoxine 5'-phosphate: step 1/1. Catalyzes the oxidation of either pyridoxine 5'-phosphate (PNP) or pyridoxamine 5'-phosphate (PMP) into pyridoxal 5'-phosphate (PLP). This chain is Pyridoxine/pyridoxamine 5'-phosphate oxidase, found in Rhodococcus jostii (strain RHA1).